Reading from the N-terminus, the 231-residue chain is Sugar fermentation stimulation protein homolog (231 aa).

It belongs to the SfsA family.

The polypeptide is Sugar fermentation stimulation protein homolog (Syntrophotalea carbinolica (strain DSM 2380 / NBRC 103641 / GraBd1) (Pelobacter carbinolicus)).